The primary structure comprises 426 residues: Cytochrome b-c1 complex subunit 2, mitochondrial (426 aa).

Residues 1–30 constitute a mitochondrion transit peptide; it reads MKSFTRNLRRFQTPRRNLHGISYTPKKVEG.

This sequence belongs to the peptidase M16 family. UQCRC2/QCR2 subfamily. Component of the ubiquinol-cytochrome c oxidoreductase (cytochrome b-c1 complex, complex III, CIII), a multisubunit enzyme composed of 3 respiratory subunits cytochrome b, cytochrome c1 and Rieske protein, 2 core protein subunits, and additional low-molecular weight protein subunits. The complex exists as an obligatory dimer and forms supercomplexes (SCs) in the inner mitochondrial membrane with cytochrome c oxidase (complex IV, CIV).

It is found in the mitochondrion inner membrane. Its function is as follows. Component of the ubiquinol-cytochrome c oxidoreductase, a multisubunit transmembrane complex that is part of the mitochondrial electron transport chain which drives oxidative phosphorylation. The respiratory chain contains 3 multisubunit complexes succinate dehydrogenase (complex II, CII), ubiquinol-cytochrome c oxidoreductase (cytochrome b-c1 complex, complex III, CIII) and cytochrome c oxidase (complex IV, CIV), that cooperate to transfer electrons derived from NADH and succinate to molecular oxygen, creating an electrochemical gradient over the inner membrane that drives transmembrane transport and the ATP synthase. The cytochrome b-c1 complex catalyzes electron transfer from ubiquinol to cytochrome c, linking this redox reaction to translocation of protons across the mitochondrial inner membrane, with protons being carried across the membrane as hydrogens on the quinol. In the process called Q cycle, 2 protons are consumed from the matrix, 4 protons are released into the intermembrane space and 2 electrons are passed to cytochrome c. The sequence is that of Cytochrome b-c1 complex subunit 2, mitochondrial (qcr2) from Schizosaccharomyces pombe (strain 972 / ATCC 24843) (Fission yeast).